Here is a 100-residue protein sequence, read N- to C-terminus: Succinate dehydrogenase assembly factor 4, mitochondrial (100 aa).

Residues 1-31 (MFNRNLRAVILKNYNKALTRCLHDAGNLKRP) constitute a mitochondrion transit peptide. The tract at residues 24-100 (DAGNLKRPTP…YSYEGRVTDF (77 aa)) is disordered. Basic and acidic residues-rich tracts occupy residues 36–68 (LPKE…KDFE) and 85–100 (PTVH…VTDF).

Belongs to the SDHAF4 family. Interacts with sdh1 in its FAD-bound form.

Its subcellular location is the mitochondrion matrix. Functionally, plays an essential role in the assembly of succinate dehydrogenase (SDH), an enzyme complex (also referred to as respiratory complex II) that is a component of both the tricarboxylic acid (TCA) cycle and the mitochondrial electron transport chain, and which couples the oxidation of succinate to fumarate with the reduction of ubiquinone (coenzyme Q) to ubiquinol. Binds to the flavoprotein subunit sdh1 in its FAD-bound form, blocking the generation of excess reactive oxygen species (ROS) and facilitating its assembly with the iron-sulfur protein subunit sdh2 into the SDH catalytic dimer. This chain is Succinate dehydrogenase assembly factor 4, mitochondrial, found in Schizosaccharomyces pombe (strain 972 / ATCC 24843) (Fission yeast).